Here is a 555-residue protein sequence, read N- to C-terminus: Acetyl-coenzyme A thioesterase (555 aa).

The HotDog ACOT-type 1 domain occupies 5–117 (APGEVVMSQA…FSTFVAKPVG (113 aa)). At Lys33 the chain carries N6-succinyllysine. CoA contacts are provided by residues 53-55 (TAS), 82-84 (STS), and Arg144. An N6-succinyllysine mark is found at Lys159 and Lys228. Positions 179–294 (RGTSVQSIEL…FLIYNAADDK (116 aa)) constitute a HotDog ACOT-type 2 domain. 234–236 (KFR) is a binding site for CoA. In terms of domain architecture, START spans 340–549 (CIHWDISKQA…IQFLENPPDD (210 aa)).

In terms of assembly, homodimer or homotetramer.

It localises to the cytoplasm. Its subcellular location is the cytosol. It carries out the reaction acetyl-CoA + H2O = acetate + CoA + H(+). It catalyses the reaction butanoyl-CoA + H2O = butanoate + CoA + H(+). The catalysed reaction is hexanoyl-CoA + H2O = hexanoate + CoA + H(+). It participates in lipid metabolism; fatty acid metabolism. Its activity is regulated as follows. Inhibited by ADP. Active in the presence of ATP. Cold labile, it dissociates into inactive monomers at low temperature. In terms of biological role, catalyzes the hydrolysis of acyl-CoAs into free fatty acids and coenzyme A (CoASH), regulating their respective intracellular levels. Preferentially hydrolyzes acetyl-CoA. The chain is Acetyl-coenzyme A thioesterase (ACOT12) from Homo sapiens (Human).